A 232-amino-acid chain; its full sequence is Flagellar L-ring protein (232 aa).

A signal peptide spans 1 to 15; the sequence is MKKVLFYVLPFAFFG. A lipid anchor (N-palmitoyl cysteine) is attached at cysteine 16. Residue cysteine 16 is the site of S-diacylglycerol cysteine attachment.

The protein belongs to the FlgH family. The basal body constitutes a major portion of the flagellar organelle and consists of four rings (L,P,S, and M) mounted on a central rod.

The protein resides in the cell outer membrane. Its subcellular location is the bacterial flagellum basal body. Functionally, assembles around the rod to form the L-ring and probably protects the motor/basal body from shearing forces during rotation. This Campylobacter jejuni subsp. jejuni serotype O:23/36 (strain 81-176) protein is Flagellar L-ring protein.